Reading from the N-terminus, the 1238-residue chain is Virulence sensor protein BvgS (1238 aa).

A signal peptide spans 1 to 32 (MPAPHRLYPRSLICLAQALLAWALLAWAPAQA). At 33–307 (SQELTLVGKA…REQQWMADHP (275 aa)) the chain is on the cytoplasmic side. A helical membrane pass occupies residues 308–331 (VVKVAVLNLFAPFTLFRTDEQFGG). Residues 332-541 (ISAAVLQLLQ…PRTWYAYRNE (210 aa)) are Periplasmic-facing. Residues 542–563 (IYLLIGLGLLSALLFLSWIVYL) traverse the membrane as a helical segment. Residues 564-1238 (RRQIRQRKRA…LEQRPHQDQP (675 aa)) are Cytoplasmic-facing. The PAS domain occupies 580–651 (QLEFMRVLID…MHEFLLTRVA (72 aa)). In terms of domain architecture, PAC spans 652 to 708 (AEREPRFEDRDVTLHGRTRHVYQWTIPYGDSLGELKGIIGGWIDITERAELLRKLHD). The Histidine kinase domain maps to 726–948 (TMSHEIRTPM…TVSVDLRLTM (223 aa)). At histidine 729 the chain carries Phosphohistidine; by autocatalysis. Positions 974–1095 (RVLVVDDHKP…ALRQRLNEAV (122 aa)) constitute a Response regulatory domain. Aspartate 1023 is subject to 4-aspartylphosphate. Residues 1133 to 1228 (DEALIRQLLE…AALETQLRAW (96 aa)) enclose the HPt domain. At histidine 1172 the chain carries Phosphohistidine.

Activation requires a sequential transfer of a phosphate group from a His in the primary transmitter domain, to an Asp in the receiver domain and to a His in the secondary transmitter domain.

The protein resides in the cell inner membrane. It carries out the reaction ATP + protein L-histidine = ADP + protein N-phospho-L-histidine.. In terms of biological role, member of the two-component regulatory system BvgS/BvgA. Phosphorylates BvgA via a four-step phosphorelay in response to environmental signals. This chain is Virulence sensor protein BvgS (bvgS), found in Bordetella pertussis (strain Tohama I / ATCC BAA-589 / NCTC 13251).